The following is a 232-amino-acid chain: 2,3-bisphosphoglycerate-dependent phosphoglycerate mutase 1 (232 aa).

Residues 8–15 (RHGQSLWN), 21–22 (TG), Arg58, 114–117 (ERYY), Lys125, 141–142 (RR), and 185–186 (GN) contribute to the substrate site. The Tele-phosphohistidine intermediate role is filled by His9. Glu114 serves as the catalytic Proton donor/acceptor.

Belongs to the phosphoglycerate mutase family. BPG-dependent PGAM subfamily.

The catalysed reaction is (2R)-2-phosphoglycerate = (2R)-3-phosphoglycerate. Its pathway is carbohydrate degradation; glycolysis; pyruvate from D-glyceraldehyde 3-phosphate: step 3/5. Functionally, catalyzes the interconversion of 2-phosphoglycerate and 3-phosphoglycerate. This chain is 2,3-bisphosphoglycerate-dependent phosphoglycerate mutase 1, found in Gloeobacter violaceus (strain ATCC 29082 / PCC 7421).